We begin with the raw amino-acid sequence, 141 residues long: Putative pre-16S rRNA nuclease (141 aa).

It belongs to the YqgF nuclease family.

The protein resides in the cytoplasm. Could be a nuclease involved in processing of the 5'-end of pre-16S rRNA. The protein is Putative pre-16S rRNA nuclease of Acetivibrio thermocellus (strain ATCC 27405 / DSM 1237 / JCM 9322 / NBRC 103400 / NCIMB 10682 / NRRL B-4536 / VPI 7372) (Clostridium thermocellum).